The sequence spans 605 residues: UvrABC system protein C (605 aa).

Positions 14–92 constitute a GIY-YIG domain; the sequence is QSCGVYKMVG…IKSLKPLYNI (79 aa). The UVR domain occupies 202–237; it reads KEVKEQLLFTMRKCSSEENYELAAIYRDRVKFLEQI.

It belongs to the UvrC family. As to quaternary structure, interacts with UvrB in an incision complex.

Its subcellular location is the cytoplasm. The UvrABC repair system catalyzes the recognition and processing of DNA lesions. UvrC both incises the 5' and 3' sides of the lesion. The N-terminal half is responsible for the 3' incision and the C-terminal half is responsible for the 5' incision. The polypeptide is UvrABC system protein C (Wolbachia pipientis wMel).